Here is a 133-residue protein sequence, read N- to C-terminus: MLSPEAERVLRYLVEVEELAEAVLSDKRQIVDLDTKRNQNREGLRALQKDLSVSEDVMVCFGNMFIKMPHPKTKEMIQKDQEHLDKEIERLRSQLKVKVNRLFEAQGKPELKGFNLNPLSPDEVKALKVILKG.

This sequence belongs to the prefoldin subunit beta family. In terms of assembly, component of the PAQosome complex which is responsible for the biogenesis of several protein complexes and which consists of R2TP complex members RUVBL1, RUVBL2, RPAP3 and PIH1D1, URI complex members PFDN2, PFDN6, PDRG1, UXT and URI1 as well as ASDURF, POLR2E and DNAAF10/WDR92.

Its subcellular location is the cytoplasm. In terms of biological role, may play a role in chaperone-mediated protein folding. This chain is p53 and DNA damage-regulated protein 1 (Pdrg1), found in Mus musculus (Mouse).